The sequence spans 255 residues: Indole-3-glycerol phosphate synthase (255 aa).

This sequence belongs to the TrpC family.

The catalysed reaction is 1-(2-carboxyphenylamino)-1-deoxy-D-ribulose 5-phosphate + H(+) = (1S,2R)-1-C-(indol-3-yl)glycerol 3-phosphate + CO2 + H2O. Its pathway is amino-acid biosynthesis; L-tryptophan biosynthesis; L-tryptophan from chorismate: step 4/5. The polypeptide is Indole-3-glycerol phosphate synthase (Streptococcus sanguinis (strain SK36)).